A 673-amino-acid polypeptide reads, in one-letter code: uncharacterized protein (673 aa).

The first 24 residues, 1-24, serve as a signal peptide directing secretion; that stretch reads MKIHNIIKIIIVVCLEGFALTSFA. The next 6 helical transmembrane spans lie at 224 to 244, 253 to 273, 410 to 430, 436 to 456, 469 to 489, and 562 to 582; these read NAIGAALILYVMFFAFNMVLN, IALFVIKLLFVTYFSIGLGPL, IILISGLVFAVIFLSILLYFI, CMITIYVMTYVSPIFIPMMLF, VSLSCALQPAVVAGFIALLIT, and VVSILAELLCVLVFSVIFYYF. The tract at residues 624–673 is disordered; the sequence is AQATQGKPPSSGDMPGDGGSKRSEGQKGDDSFISSGGNSSGDSLSSSGGK. Basic and acidic residues predominate over residues 642–653; sequence GSKRSEGQKGDD. Residues 654–673 show a composition bias toward low complexity; that stretch reads SFISSGGNSSGDSLSSSGGK.

This sequence belongs to the TrbL/VirB6 family.

The protein resides in the cell membrane. This is an uncharacterized protein from Rickettsia bellii (strain RML369-C).